Consider the following 266-residue polypeptide: Short-chain dehydrogenase/reductase tropE (266 aa).

The NADP(+) site is built by Leu18, Asp69, and Asn96. Ser147 functions as the Proton donor in the catalytic mechanism. Tyr181, Lys185, and Thr216 together coordinate NADP(+). Residue Tyr181 is the Proton acceptor of the active site. The active-site Lowers pKa of active site Tyr is the Lys185.

The protein belongs to the short-chain dehydrogenases/reductases (SDR) family.

Its pathway is secondary metabolite biosynthesis. In terms of biological role, short-chain dehydrogenase/reductase; part of the gene cluster that mediates the biosynthesis of the tropolone class of fungal maleic anhydrides. The pathway begins with the synthesis of 3-methylorcinaldehyde by the non-reducing polyketide synthase (PKS) tropA. 3-methylorcinaldehyde is the substrate for the FAD-dependent monooxygenase tropB to yield a dearomatized hydroxycyclohexadione. The 2-oxoglutarate-dependent dioxygenase tropC then performs the oxidative ring expansion to provide the first tropolone metabolite stipitaldehyde. Trop D converts stipitaldehyde into stipitacetal which is in turn converted to stipitalide by the short-chain dehydrogenase/reductase tropE. The next steps involve tropF, tropG, tropH, tropI and tropJ to form successive tropolone maleic anhydrides including stipitaldehydic, stipitatonic and stipitatic acids. This Talaromyces stipitatus (strain ATCC 10500 / CBS 375.48 / QM 6759 / NRRL 1006) (Penicillium stipitatum) protein is Short-chain dehydrogenase/reductase tropE.